The chain runs to 123 residues: MSITKDQIIEAVAAMSVMDVVELITAMEEKFGVSAAAAVAVAGAGAAAEAAEEKTEFDVILKAAGANKVAVIKAVRGATGLGLKEAKDLVESAPAALKEGVSKDDAEALKKSLEEAGAEVEVK.

This sequence belongs to the bacterial ribosomal protein bL12 family. In terms of assembly, homodimer. Part of the ribosomal stalk of the 50S ribosomal subunit. Forms a multimeric L10(L12)X complex, where L10 forms an elongated spine to which 2 to 4 L12 dimers bind in a sequential fashion. Binds GTP-bound translation factors.

In terms of biological role, forms part of the ribosomal stalk which helps the ribosome interact with GTP-bound translation factors. Is thus essential for accurate translation. In Salmonella arizonae (strain ATCC BAA-731 / CDC346-86 / RSK2980), this protein is Large ribosomal subunit protein bL12.